The following is a 423-amino-acid chain: Glutamyl-tRNA reductase (423 aa).

Substrate-binding positions include 49-52, Ser107, 112-114, and Gln118; these read TCNR and EPQ. The Nucleophile role is filled by Cys50. 187–192 is a binding site for NADP(+); that stretch reads GAGETI.

It belongs to the glutamyl-tRNA reductase family. Homodimer.

The catalysed reaction is (S)-4-amino-5-oxopentanoate + tRNA(Glu) + NADP(+) = L-glutamyl-tRNA(Glu) + NADPH + H(+). It participates in porphyrin-containing compound metabolism; protoporphyrin-IX biosynthesis; 5-aminolevulinate from L-glutamyl-tRNA(Glu): step 1/2. In terms of biological role, catalyzes the NADPH-dependent reduction of glutamyl-tRNA(Glu) to glutamate 1-semialdehyde (GSA). The chain is Glutamyl-tRNA reductase from Pseudoalteromonas atlantica (strain T6c / ATCC BAA-1087).